Here is a 494-residue protein sequence, read N- to C-terminus: Protein DETOXIFICATION 21 (494 aa).

Position 2 is an N-acetylalanine (alanine 2). 12 helical membrane-spanning segments follow: residues 40–60 (LWIVAAPAIFTRFSTFGVSII), 73–95 (LAAYSITFTVLLRFSNGILLGMA), 123–143 (IVLTGCTICLTPVYIFSGPIL), 158–178 (IIALWVIGINFSFVPSFTCQM), 188–208 (IIAYVAAVSLGVHVFLSWLLM), 217–237 (GAMTSTLVAFWLPNIAQLLFV), 268–288 (GGMLCLELWYNSILVLLTGNL), 297–317 (ALAICLNINGLEMMIALGFLA), 340–360 (LTAVFTSLSLGIVLFFVFLFL), 384–404 (LLAFSILMNSVQPVLSGVAVG), 416–436 (LACYYLVGIPIGIILGYVVGL), and 441–461 (VWIGMLFGIFVQTCVLTVMTL).

It belongs to the multi antimicrobial extrusion (MATE) (TC 2.A.66.1) family.

Its subcellular location is the membrane. The sequence is that of Protein DETOXIFICATION 21 from Arabidopsis thaliana (Mouse-ear cress).